The sequence spans 848 residues: MGQHQSRDDSHGGDRHRHHDAGTSGPTSPSDHDPYPSRTGRGSRRNLVASIVGGGSNNELPERKETAAERQMRRLERERVARVEERERSIREEHVDGGYLVTMGVYTGPEDFNKAIVRQLMIERRVAPFWRGLEDYESDWTEHQLVAAGRGLPIPAADEIPSEDSARPHSSNSTNAPSSNLQNLTVPIASRSQSASYDTSVGRSPSHSSFNTSSPTSPLNAPATSTSLLRPRAKTLGLKSSSKEPSASDSAPREIQLPRDSQVNGQAIEAFLYKDAVECSICLIFYPPYLNRTRCCDQSICSECFVQIKRPDPHTPEHHGPPQPAPDQAEDTEMLVSEPAACPYCQRPEFGVTYEPPPFRRGLVYAKPSRELANFSSAMSSSSSITSPPITSPGLAPRVDNRRRATSLSANDSNVITTDRIRPDWSAKLEAANLRKAKKNAAASALHAAAYVLPGTSENRSYVFGRSRFGRNRSDPDNSGSATPSNRDTSSRTAAESSGQARREGRDSHAARRTRDVEDMMMAEAIRLSIVAEEERKKKAEKEAAKEAAKNAKKQAKEDKKKEKKERKSIYGTNGHSASSSMLNLGNSLAATLTGRRRGDSVASNLATEVTPEEVEEPLQGKGKGVAHPYLGNDGSATDNGLLGTQHLDPSTSSSLLETHQSIPSPTSPDKPSHLRQMSTASSASSSVAESGNGTNPQGSSTSIESPGVTDTNEGNEDGDTGAESMFNFRSLTAMIEKENDNEKTDAVHVENAHEASGSRRGSPDETASQDMDVSMETLRPRDSPQQPKPDHHVPMGLQMPAPKIDTSIVTPQLTLTPDTPALMSPTEENGKQLGSNLQNLSNNEISQ.

Positions 1–13 (MGQHQSRDDSHGG) are enriched in basic and acidic residues. Disordered stretches follow at residues 1-67 (MGQH…KETA), 154-260 (IPAA…LPRD), 312-332 (DPHTPEHHGPPQPAPDQAEDT), 378-411 (AMSSSSSITSPPITSPGLAPRVDNRRRATSLSAN), 466-518 (RSRF…RDVE), 541-582 (EKEA…SSSM), 595-800 (GRRR…GLQM), and 813-848 (QLTLTPDTPALMSPTEENGKQLGSNLQNLSNNEISQ). Positions 168–203 (PHSSNSTNAPSSNLQNLTVPIASRSQSASYDTSVGR) are enriched in polar residues. 2 stretches are compositionally biased toward low complexity: residues 204–218 (SPSHSSFNTSSPTSP) and 239–250 (KSSSKEPSASDS). Over residues 378–393 (AMSSSSSITSPPITSP) the composition is skewed to low complexity. The span at 477–500 (DNSGSATPSNRDTSSRTAAESSGQ) shows a compositional bias: polar residues. Composition is skewed to basic and acidic residues over residues 501–518 (ARREGRDSHAARRTRDVE) and 541–569 (EKEAAKEAAKNAKKQAKEDKKKEKKERKS). Polar residues-rich tracts occupy residues 571–582 (YGTNGHSASSSM) and 648–670 (LDPSTSSSLLETHQSIPSPTSPD). Residues 679-691 (STASSASSSVAES) are compositionally biased toward low complexity. A compositionally biased stretch (polar residues) spans 692 to 713 (GNGTNPQGSSTSIESPGVTDTN). Basic and acidic residues-rich tracts occupy residues 736-764 (IEKENDNEKTDAVHVENAHEASGSRRGSP) and 779-794 (LRPRDSPQQPKPDHHV). Residues 833-848 (QLGSNLQNLSNNEISQ) are compositionally biased toward low complexity.

The protein belongs to the SIP5 family.

Its subcellular location is the cytoplasm. Functionally, may negatively regulate the snf1 kinase. The protein is Protein sip5 (sip5) of Botryotinia fuckeliana (strain B05.10) (Noble rot fungus).